The following is a 182-amino-acid chain: ATP synthase subunit delta (182 aa).

Belongs to the ATPase delta chain family. In terms of assembly, F-type ATPases have 2 components, F(1) - the catalytic core - and F(0) - the membrane proton channel. F(1) has five subunits: alpha(3), beta(3), gamma(1), delta(1), epsilon(1). F(0) has three main subunits: a(1), b(2) and c(10-14). The alpha and beta chains form an alternating ring which encloses part of the gamma chain. F(1) is attached to F(0) by a central stalk formed by the gamma and epsilon chains, while a peripheral stalk is formed by the delta and b chains.

The protein resides in the cell membrane. In terms of biological role, f(1)F(0) ATP synthase produces ATP from ADP in the presence of a proton or sodium gradient. F-type ATPases consist of two structural domains, F(1) containing the extramembraneous catalytic core and F(0) containing the membrane proton channel, linked together by a central stalk and a peripheral stalk. During catalysis, ATP synthesis in the catalytic domain of F(1) is coupled via a rotary mechanism of the central stalk subunits to proton translocation. Functionally, this protein is part of the stalk that links CF(0) to CF(1). It either transmits conformational changes from CF(0) to CF(1) or is implicated in proton conduction. The chain is ATP synthase subunit delta from Lactobacillus gasseri (strain ATCC 33323 / DSM 20243 / BCRC 14619 / CIP 102991 / JCM 1131 / KCTC 3163 / NCIMB 11718 / NCTC 13722 / AM63).